The chain runs to 382 residues: Mannitol-1-phosphate 5-dehydrogenase (382 aa).

3–14 (ALHFGAGNIGRG) contacts NAD(+). Residue Lys-269 is modified to N6-acetyllysine.

It belongs to the mannitol dehydrogenase family.

The enzyme catalyses D-mannitol 1-phosphate + NAD(+) = beta-D-fructose 6-phosphate + NADH + H(+). This Escherichia coli (strain K12 / MC4100 / BW2952) protein is Mannitol-1-phosphate 5-dehydrogenase.